The chain runs to 163 residues: HTH-type transcriptional regulator IscR (163 aa).

One can recognise an HTH rrf2-type domain in the interval Arg2–Asn131. The segment at residues Leu28–Lys51 is a DNA-binding region (H-T-H motif). [2Fe-2S] cluster is bound by residues Cys92, Cys98, and Cys104.

[2Fe-2S] cluster is required as a cofactor.

Its function is as follows. Regulates the transcription of several operons and genes involved in the biogenesis of Fe-S clusters and Fe-S-containing proteins. The polypeptide is HTH-type transcriptional regulator IscR (Klebsiella pneumoniae subsp. pneumoniae (strain ATCC 700721 / MGH 78578)).